Consider the following 264-residue polypeptide: Short chain dehydrogenase/reductase AacuN (264 aa).

The NADP(+) site is built by Ile24, Asp70, Asn97, and Arg130. Residues Ser146, Ser147, and Tyr161 each act as proton donor in the active site. Tyr161, Lys165, and Thr196 together coordinate NADP(+). Catalysis depends on Lys165, which acts as the Lowers pKa of active site Tyr.

It belongs to the short-chain dehydrogenases/reductases (SDR) family.

It catalyses the reaction 3,8,9,10-tetrahydroxy-6-methyl-1,4-dihydroanthracen-1-one + NADPH + H(+) = (3R)-3,8,9,10-tetrahydroxy-6-methyl-1,2,3,4-tetrahydroanthracen-1-one + NADP(+). Its pathway is secondary metabolite biosynthesis. Functionally, atrochrysone carboxylic acid synthase; part of the gene cluster that mediates the biosynthesis of the tetrahydroxanthone dimer secalonic acid D. The pathway begins with the synthesis of atrochrysone thioester by the polyketide synthase AacuL. The atrochrysone carboxyl ACP thioesterase AacuM then breaks the thioester bond and releases the atrochrysone carboxylic acid from AacuL. Atrochrysone carboxylic acid is decarboxylated by the decarboxylase AacuI, and oxidized by the anthrone oxygenase AacuG to yield emodin. Emodin is then reduced to emodin hydroquinone by a yet unidentified oxidoreductase. A-ring reduction by the short chain dehydrogenase AacuN, dehydration by the scytalone dehydratase-like protein AacuK and probable spontaneous re-oxidation, results in overall deoxygenation to chrysophanol. Baeyer-Villiger oxidation by the Baeyer-Villiger monooxygenase (BVMO) AacuH then yields monodictyphenone. Monodictyphenone is transformed into compounds with the tetrahydroxanthone skeleton via methylesterification by the methyltransferase AacuQ, followed by the action of the flavin-dependent monooxygenase AacuC, the isomerase AacuP, and the short chain dehydrogenase/reductase AacuF or AacuD. AacuF and AacuD should accept the same compound as a substrate but perform the ketoreduction with a different stereoselectivity, thus yielding blennolides B and A, respectively. In the final step of the biosynthesis, the cytochrome P450 monooxygenase AacuE accepts blennolide B and/or blennolide A to conduct the dimerization reaction to furnish the tetrahydroxanthone dimers, secalonic acids D, B, and F. In Aspergillus aculeatus (strain ATCC 16872 / CBS 172.66 / WB 5094), this protein is Short chain dehydrogenase/reductase AacuN.